Consider the following 45-residue polypeptide: Large ribosomal subunit protein bL34 (45 aa).

The segment at Met-1 to Val-45 is disordered. A compositionally biased stretch (basic residues) spans Ser-10–Val-45.

Belongs to the bacterial ribosomal protein bL34 family.

In Prochlorococcus marinus (strain NATL2A), this protein is Large ribosomal subunit protein bL34.